Reading from the N-terminus, the 175-residue chain is Large ribosomal subunit protein bL17m (175 aa).

The N-terminal 8 residues, 1 to 8 (MRLSVCAA), are a transit peptide targeting the mitochondrion. Positions 155–175 (DLSQSQEASNHSSHTAQTPGI) are disordered. The span at 157 to 175 (SQSQEASNHSSHTAQTPGI) shows a compositional bias: polar residues.

It belongs to the bacterial ribosomal protein bL17 family. Component of the mitochondrial ribosome large subunit (39S) which comprises a 16S rRNA and about 50 distinct proteins.

The protein resides in the mitochondrion. In Pongo abelii (Sumatran orangutan), this protein is Large ribosomal subunit protein bL17m (MRPL17).